A 190-amino-acid polypeptide reads, in one-letter code: GTP cyclohydrolase 1 (190 aa).

Zn(2+)-binding residues include cysteine 80, histidine 83, and cysteine 151.

It belongs to the GTP cyclohydrolase I family. Toroid-shaped homodecamer, composed of two pentamers of five dimers.

The catalysed reaction is GTP + H2O = 7,8-dihydroneopterin 3'-triphosphate + formate + H(+). It participates in cofactor biosynthesis; 7,8-dihydroneopterin triphosphate biosynthesis; 7,8-dihydroneopterin triphosphate from GTP: step 1/1. The sequence is that of GTP cyclohydrolase 1 from Rickettsia typhi (strain ATCC VR-144 / Wilmington).